The primary structure comprises 211 residues: Succinate dehydrogenase subunit 4, mitochondrial (211 aa).

A mitochondrion-targeting transit peptide spans 1–36 (MASRLLARSKALALALSRADAAAPGPAAGVQWLRTL). Residues 41–64 (RDPAAAASPAPAPRQPAVGSPLGL) are disordered. Residue His166 participates in heme binding. Position 179 (Tyr179) interacts with a ubiquinone. Residues 188–210 (WVFIYFKILLIIMAKETVVYFDL) form a helical membrane-spanning segment.

Component of complex II composed of eight subunits in plants: four classical SDH subunits SDH1, SDH2, SDH3 and SDH4 (a flavoprotein (FP), an iron-sulfur protein (IP), and a cytochrome b composed of a large and a small subunit.), as well as four subunits unknown in mitochondria from bacteria and heterotrophic eukaryotes. It depends on heme as a cofactor.

The protein resides in the mitochondrion inner membrane. It participates in carbohydrate metabolism; tricarboxylic acid cycle. In terms of biological role, membrane-anchoring subunit of succinate dehydrogenase (SDH). The chain is Succinate dehydrogenase subunit 4, mitochondrial from Oryza sativa subsp. japonica (Rice).